Reading from the N-terminus, the 238-residue chain is Small heat shock protein, chloroplastic (238 aa).

Residues 31-87 (APLSTGGRTRPLSVASAAQENRDNSVDVQVSQAQNAGNQQGNAVQRRPRRAGFDISP) are disordered. Positions 58–75 (VQVSQAQNAGNQQGNAVQ) are enriched in low complexity. Residues 124 to 238 (AARARRRMPW…ERKVIDVQVQ (115 aa)) enclose the sHSP domain.

The protein belongs to the small heat shock protein (HSP20) family.

The protein localises to the plastid. Its subcellular location is the chloroplast. The chain is Small heat shock protein, chloroplastic (HSP21) from Triticum aestivum (Wheat).